The following is a 549-amino-acid chain: Glucose-6-phosphate isomerase (549 aa).

The active-site Proton donor is the glutamate 355. Active-site residues include histidine 386 and lysine 514.

The protein belongs to the GPI family.

The protein localises to the cytoplasm. The catalysed reaction is alpha-D-glucose 6-phosphate = beta-D-fructose 6-phosphate. The protein operates within carbohydrate biosynthesis; gluconeogenesis. It participates in carbohydrate degradation; glycolysis; D-glyceraldehyde 3-phosphate and glycerone phosphate from D-glucose: step 2/4. In terms of biological role, catalyzes the reversible isomerization of glucose-6-phosphate to fructose-6-phosphate. This chain is Glucose-6-phosphate isomerase, found in Sodalis glossinidius (strain morsitans).